Consider the following 159-residue polypeptide: Cyanate hydratase (159 aa).

Active-site residues include R103, E106, and S129.

Belongs to the cyanase family.

It carries out the reaction cyanate + hydrogencarbonate + 3 H(+) = NH4(+) + 2 CO2. Catalyzes the reaction of cyanate with bicarbonate to produce ammonia and carbon dioxide. This is Cyanate hydratase from Blastomyces gilchristii (strain SLH14081) (Blastomyces dermatitidis).